The primary structure comprises 631 residues: Glutamyl-tRNA(Gln) amidotransferase subunit E (631 aa).

The protein belongs to the GatB/GatE family. GatE subfamily. Heterodimer of GatD and GatE.

The enzyme catalyses L-glutamyl-tRNA(Gln) + L-glutamine + ATP + H2O = L-glutaminyl-tRNA(Gln) + L-glutamate + ADP + phosphate + H(+). Its function is as follows. Allows the formation of correctly charged Gln-tRNA(Gln) through the transamidation of misacylated Glu-tRNA(Gln) in organisms which lack glutaminyl-tRNA synthetase. The reaction takes place in the presence of glutamine and ATP through an activated gamma-phospho-Glu-tRNA(Gln). The GatDE system is specific for glutamate and does not act on aspartate. The protein is Glutamyl-tRNA(Gln) amidotransferase subunit E of Methanococcus maripaludis (strain C7 / ATCC BAA-1331).